We begin with the raw amino-acid sequence, 483 residues long: GDP-fucose protein O-fucosyltransferase 3 (483 aa).

Topologically, residues Met1–Lys8 are cytoplasmic. Residues Leu9–Glu31 form a helical; Signal-anchor for type II membrane protein membrane-spanning segment. At Leu32–Phe483 the chain is on the lumenal side. A disordered region spans residues Leu45–Lys64. Residues Asn110, Asn168, and Asn318 are each glycosylated (N-linked (GlcNAc...) asparagine). Cys389 and Cys392 are joined by a disulfide. A glycan (N-linked (GlcNAc...) asparagine) is linked at Asn468.

The protein belongs to the glycosyltransferase 10 family.

It localises to the endoplasmic reticulum membrane. The enzyme catalyses L-threonyl-[protein] + GDP-beta-L-fucose = 3-O-(alpha-L-fucosyl)-L-threonyl-[protein] + GDP + H(+). It carries out the reaction L-seryl-[protein] + GDP-beta-L-fucose = 3-O-(alpha-L-fucosyl)-L-seryl-[protein] + GDP + H(+). It participates in protein modification; protein glycosylation. Its function is as follows. Protein O-fucosyltransferase that specifically catalyzes O-fucosylation of serine or threonine residues in EMI domains of target proteins, such as MMRN1, MMRN2 and EMID1. Attaches fucose through an O-glycosidic linkage. O-fucosylation of EMI domain-containing proteins may be required for facilitating protein folding and secretion. May also show alpha-(1,3)-fucosyltransferase activity toward the innermost N-acetyl glucosamine (GlcNAc) residue in biantennary N-glycan acceptors. However, this was tested with a library of synthetic substrates and this activity is unsure in vivo. May be involved in biosynthesis of Lewis X-carrying biantennary N-glycans that regulate neuron stem cell self-renewal during brain development. The sequence is that of GDP-fucose protein O-fucosyltransferase 3 (Fut10) from Rattus norvegicus (Rat).